The sequence spans 303 residues: Acetyltransferase ataH (303 aa).

A signal peptide spans 1–23; that stretch reads MPTTAAFLRALYILTTLRGIGTS. Transmembrane regions (helical) follow at residues 42-62, 194-214, and 257-277; these read FLLHTLVIIAAKYLVLDMMTF, LVFAISSCLHLAIDGRAGIML, and GYIWTWAFLSLVAPMYNFPLF.

This sequence belongs to the wax synthase family.

It localises to the membrane. Its pathway is mycotoxin biosynthesis. In terms of biological role, acetyltransferase; part of the gene cluster that mediates the biosynthesis of acetylaranotin, a member of the epipolythiodioxopiperazine (ETP) class of toxins characterized by a disulfide-bridged cyclic dipeptide. The first step of acetylaranotin biosynthesis is performed by the NRPS ataP which produces diketopiperazine cyclo-L-Phe-L-Phe via the condensation of 2 phenylalanines (L-Phe). The ataC domain of ataTC then catalyzes the formation of bishydroxylation of cyclo-L-Phe-L-Phe. The glutathione S-transferase domain ataG in ataIMG further catalyzes the conjugation of two glutathiones to the bishydroxylated intermediate. Next, the dipeptidase ataJ removes the Glu residues. The following step is performed by the carbon sulfur lyase domain ataI of ataIMG which may convert the bis-cysteinyl adduct to yield an epidithiol intermediate. The ataT domain from ataTC then catalyzes the oxidation of the free dithiols, followed by a cyclization step catalyzed by the cytochrome P450 ataF. AtaF probably acts as an epoxidase to promote a dual epoxidation formation at C8 and C9 along with C8' and C9', followed by the spontaneous nucleophilic attack of the amide nitrogens N10 and N10' to yield an intermediate with the pyrrolidine partial structure. The final steps of acetylaranotin biosynthesis involve the acetylation and ring rearrangement of an epitetrathiodiketopiperazine intermediate to produce acetylaranotin. AtaH probably catalyzes the acetylation of epitetrathiodiketopiperazine to produce a diacetate and ataY is responsible for the formation of the dihydrooxepin moiety that converts the diacetate intermediate to acetylaranotin via acetylapoaranotin. Both enzymes could function independently in the absence of the other. The acetylaranotin bis-thiomethyltransferase ataS located outside of acetylaranotin gene cluster is the main thiomethyltransferase responsible for converting acetylaranotin and its related intermediates to their methylated forms. This is Acetyltransferase ataH from Aspergillus terreus (strain NIH 2624 / FGSC A1156).